The sequence spans 223 residues: Deoxyribose-phosphate aldolase (223 aa).

Residue aspartate 91 is the Proton donor/acceptor of the active site. Lysine 153 serves as the catalytic Schiff-base intermediate with acetaldehyde. The active-site Proton donor/acceptor is the lysine 182.

The protein belongs to the DeoC/FbaB aldolase family. DeoC type 1 subfamily.

The protein localises to the cytoplasm. The catalysed reaction is 2-deoxy-D-ribose 5-phosphate = D-glyceraldehyde 3-phosphate + acetaldehyde. It participates in carbohydrate degradation; 2-deoxy-D-ribose 1-phosphate degradation; D-glyceraldehyde 3-phosphate and acetaldehyde from 2-deoxy-alpha-D-ribose 1-phosphate: step 2/2. Catalyzes a reversible aldol reaction between acetaldehyde and D-glyceraldehyde 3-phosphate to generate 2-deoxy-D-ribose 5-phosphate. The sequence is that of Deoxyribose-phosphate aldolase from Streptococcus pyogenes serotype M3 (strain ATCC BAA-595 / MGAS315).